The sequence spans 623 residues: Pyranose 2-oxidase (623 aa).

The signal sequence occupies residues 1–28 (MSTSSSDPFFNFAKSSFRSAAAQKASAS). Residues 29 to 38 (SLPPLPGPDK) constitute a propeptide that is removed on maturation. At His-167 the chain carries Tele-8alpha-FAD histidine. Substrate-binding residues include Gln-448 and His-450. Catalysis depends on His-548, which acts as the Proton acceptor. Residue Asn-593 is part of the active site.

This sequence belongs to the GMC oxidoreductase family. As to quaternary structure, homotetramer. FAD serves as cofactor.

The protein localises to the periplasm. The catalysed reaction is D-glucose + O2 = 2-dehydro-D-glucose + H2O2. In terms of biological role, catalyzes the oxidation of various aldopyranoses and disaccharides on carbon-2 to the corresponding 2-keto sugars concomitant with the reduction of O(2) to H(2)O(2). Plays an important role in lignin degradation of wood rot fungi by supplying the essential cosubstrate H(2)O(2) for the ligninolytic peroxidases, lignin peroxidase and manganese-dependent peroxidase. This chain is Pyranose 2-oxidase (p2ox), found in Peniophora sp. (strain SG) (White-rot fungus).